The following is a 293-amino-acid chain: Probable mediator of RNA polymerase II transcription subunit 15b (293 aa).

Belongs to the plant Mediator complex subunit 15 family. In terms of assembly, component of the Mediator complex.

Its subcellular location is the nucleus. In terms of biological role, component of the Mediator complex, a coactivator involved in the regulated transcription of nearly all RNA polymerase II-dependent genes. Mediator functions as a bridge to convey information from gene-specific regulatory proteins to the basal RNA polymerase II transcription machinery. The Mediator complex, having a compact conformation in its free form, is recruited to promoters by direct interactions with regulatory proteins and serves for the assembly of a functional preinitiation complex with RNA polymerase II and the general transcription factors. This chain is Probable mediator of RNA polymerase II transcription subunit 15b (MED15B), found in Arabidopsis thaliana (Mouse-ear cress).